The primary structure comprises 945 residues: UvrABC system protein A (945 aa).

Position 31–38 (31–38 (GLSGSGKS)) interacts with ATP. The C4-type zinc-finger motif lies at 254–281 (CPVCGHSISELEPKLFSFNNPAGACPTC). 2 ABC transporter domains span residues 310-587 (WDRR…PDSL) and 607-937 (RDKK…HFLK). 640-647 (GVSGSGKS) contributes to the ATP binding site. A C4-type zinc finger spans residues 740–766 (CEACQGDGVIKVEMHFLPDIYVPCDVC).

This sequence belongs to the ABC transporter superfamily. UvrA family. In terms of assembly, forms a heterotetramer with UvrB during the search for lesions.

It is found in the cytoplasm. The UvrABC repair system catalyzes the recognition and processing of DNA lesions. UvrA is an ATPase and a DNA-binding protein. A damage recognition complex composed of 2 UvrA and 2 UvrB subunits scans DNA for abnormalities. When the presence of a lesion has been verified by UvrB, the UvrA molecules dissociate. This chain is UvrABC system protein A, found in Pseudomonas aeruginosa (strain ATCC 15692 / DSM 22644 / CIP 104116 / JCM 14847 / LMG 12228 / 1C / PRS 101 / PAO1).